A 129-amino-acid polypeptide reads, in one-letter code: Allergen Bra j 1-E (129 aa).

A disordered region spans residues 28–47; it reads KQAMQSGSGPQPQGPQQRPP. Low complexity predominate over residues 32 to 47; sequence QSGSGPQPQGPQQRPP.

The protein belongs to the 2S seed storage albumins family. The mature protein consists of a small and a large chain linked by two disulfide bonds.

Its function is as follows. This is a 2S seed storage protein. The sequence is that of Allergen Bra j 1-E from Brassica juncea (Indian mustard).